Reading from the N-terminus, the 261-residue chain is Precorrin-6A synthase [deacetylating] (261 aa).

The enzyme catalyses precorrin-5 + S-adenosyl-L-methionine + H2O = precorrin-6A + acetate + S-adenosyl-L-homocysteine + 2 H(+). Its pathway is cofactor biosynthesis; adenosylcobalamin biosynthesis; cob(II)yrinate a,c-diamide from precorrin-2 (aerobic route): step 5/10. In terms of biological role, catalyzes the methylation of C-1 in precorrin-5 and the subsequent extrusion of acetic acid from the resulting intermediate to form cobalt-precorrin-6A. This is Precorrin-6A synthase [deacetylating] (cobF) from Sinorhizobium sp.